A 273-amino-acid chain; its full sequence is Putative pyruvate, phosphate dikinase regulatory protein (273 aa).

153–160 (GISRTSKT) is a binding site for ADP.

It belongs to the pyruvate, phosphate/water dikinase regulatory protein family. PDRP subfamily.

It catalyses the reaction N(tele)-phospho-L-histidyl/L-threonyl-[pyruvate, phosphate dikinase] + ADP = N(tele)-phospho-L-histidyl/O-phospho-L-threonyl-[pyruvate, phosphate dikinase] + AMP + H(+). The enzyme catalyses N(tele)-phospho-L-histidyl/O-phospho-L-threonyl-[pyruvate, phosphate dikinase] + phosphate + H(+) = N(tele)-phospho-L-histidyl/L-threonyl-[pyruvate, phosphate dikinase] + diphosphate. Functionally, bifunctional serine/threonine kinase and phosphorylase involved in the regulation of the pyruvate, phosphate dikinase (PPDK) by catalyzing its phosphorylation/dephosphorylation. In Rhizobium leguminosarum bv. trifolii (strain WSM2304), this protein is Putative pyruvate, phosphate dikinase regulatory protein.